Reading from the N-terminus, the 350-residue chain is Serine-threonine kinase receptor-associated protein (350 aa).

WD repeat units follow at residues 12–56, 57–96, 98–137, 141–179, 180–212, 221–262, and 263–302; these read GHTR…GTFL, GHKG…ELMT, AHKH…AEPK, GHTS…EVKS, LNFN…HSAV, EAPA…ESYK, and GHFG…TYGL. A phosphoserine mark is found at serine 312, serine 335, and serine 338.

The protein belongs to the WD repeat STRAP family. In terms of assembly, part of the core SMN complex that contains SMN1, GEMIN2/SIP1, DDX20/GEMIN3, GEMIN4, GEMIN5, GEMIN6, GEMIN7, GEMIN8 and STRAP/UNRIP. Part of the SMN-Sm complex that contains SMN1, GEMIN2/SIP1, DDX20/GEMIN3, GEMIN4, GEMIN5, GEMIN6, GEMIN7, GEMIN8, STRAP/UNRIP and the Sm proteins SNRPB, SNRPD1, SNRPD2, SNRPD3, SNRPE, SNRPF and SNRPG. Associates with the SMN complex in the cytoplasm but not in the nucleus. Interacts with GEMIN6; the interaction is direct. Interacts with GEMIN7; the interaction is direct. Interacts with CSDE1/UNR and MAWBP. Interacts with PDPK1. Interacts with TRIM48.

It localises to the cytoplasm. The protein localises to the nucleus. In terms of biological role, the SMN complex catalyzes the assembly of small nuclear ribonucleoproteins (snRNPs), the building blocks of the spliceosome, and thereby plays an important role in the splicing of cellular pre-mRNAs. Most spliceosomal snRNPs contain a common set of Sm proteins SNRPB, SNRPD1, SNRPD2, SNRPD3, SNRPE, SNRPF and SNRPG that assemble in a heptameric protein ring on the Sm site of the small nuclear RNA to form the core snRNP (Sm core). In the cytosol, the Sm proteins SNRPD1, SNRPD2, SNRPE, SNRPF and SNRPG are trapped in an inactive 6S pICln-Sm complex by the chaperone CLNS1A that controls the assembly of the core snRNP. To assemble core snRNPs, the SMN complex accepts the trapped 5Sm proteins from CLNS1A forming an intermediate. Binding of snRNA inside 5Sm triggers eviction of the SMN complex, thereby allowing binding of SNRPD3 and SNRPB to complete assembly of the core snRNP. STRAP plays a role in the cellular distribution of the SMN complex. Negatively regulates TGF-beta signaling but positively regulates the PDPK1 kinase activity by enhancing its autophosphorylation and by significantly reducing the association of PDPK1 with 14-3-3 protein. In Homo sapiens (Human), this protein is Serine-threonine kinase receptor-associated protein (STRAP).